A 1317-amino-acid chain; its full sequence is Clustered mitochondria protein homolog (1317 aa).

The region spanning 382 to 626 (DITRSQESYL…RVTPLDVTWQ (245 aa)) is the Clu domain. Positions 669–689 (KAQEEAANKEQSSEVTESKEQ) are enriched in basic and acidic residues. Disordered stretches follow at residues 669–700 (KAQEEAANKEQSSEVTESKEQESEEKAEEALD) and 939–966 (ANGVNGASHDEGKKKKKKGGDSKSPSRA). TPR repeat units lie at residues 1040 to 1073 (AKLYHQLSMLYYQTDEKEAAVELARKAVIVTERT), 1082 to 1115 (ILAYLNLSLFEHASGNTKAALVYIKHAMDLWKII), and 1124 to 1157 (ITTMNNAAVMLQHLKQYSDSRKWFEASLAVCESL). Disordered stretches follow at residues 1252 to 1273 (VQPQVGQTAPEASGAKGAANAS) and 1288 to 1317 (GGDATSSRSKQKKRAAASNPKLRGSKKSSA).

Belongs to the CLU family. As to quaternary structure, may associate with the eukaryotic translation initiation factor 3 (eIF-3) complex.

It is found in the cytoplasm. MRNA-binding protein involved in proper cytoplasmic distribution of mitochondria. The chain is Clustered mitochondria protein homolog from Neosartorya fischeri (strain ATCC 1020 / DSM 3700 / CBS 544.65 / FGSC A1164 / JCM 1740 / NRRL 181 / WB 181) (Aspergillus fischerianus).